Here is a 252-residue protein sequence, read N- to C-terminus: Indole-3-glycerol phosphate synthase (252 aa).

This sequence belongs to the TrpC family.

It carries out the reaction 1-(2-carboxyphenylamino)-1-deoxy-D-ribulose 5-phosphate + H(+) = (1S,2R)-1-C-(indol-3-yl)glycerol 3-phosphate + CO2 + H2O. It participates in amino-acid biosynthesis; L-tryptophan biosynthesis; L-tryptophan from chorismate: step 4/5. This chain is Indole-3-glycerol phosphate synthase, found in Bacillus licheniformis (strain ATCC 14580 / DSM 13 / JCM 2505 / CCUG 7422 / NBRC 12200 / NCIMB 9375 / NCTC 10341 / NRRL NRS-1264 / Gibson 46).